Consider the following 364-residue polypeptide: Tyrosine--tRNA ligase (364 aa).

Tyr39 is an L-tyrosine binding site. Residues His49 and Trp52 each contribute to the ATP site. Tyr165, Gln169, Asp172, and Gln187 together coordinate L-tyrosine. The 'KMSKS' region signature appears at 238-242 (KMSKS). Lys241 contributes to the ATP binding site.

The protein belongs to the class-I aminoacyl-tRNA synthetase family. TyrS type 4 subfamily. As to quaternary structure, homodimer.

Its subcellular location is the cytoplasm. It carries out the reaction tRNA(Tyr) + L-tyrosine + ATP = L-tyrosyl-tRNA(Tyr) + AMP + diphosphate + H(+). Its function is as follows. Catalyzes the attachment of tyrosine to tRNA(Tyr) in a two-step reaction: tyrosine is first activated by ATP to form Tyr-AMP and then transferred to the acceptor end of tRNA(Tyr). The chain is Tyrosine--tRNA ligase from Aeropyrum pernix (strain ATCC 700893 / DSM 11879 / JCM 9820 / NBRC 100138 / K1).